A 129-amino-acid chain; its full sequence is Small ribosomal subunit protein uS11c (129 aa).

The protein belongs to the universal ribosomal protein uS11 family. Part of the 30S ribosomal subunit.

The protein localises to the plastid. It localises to the chloroplast. This is Small ribosomal subunit protein uS11c from Cyanidium caldarium (Red alga).